Reading from the N-terminus, the 127-residue chain is UPF0102 protein Mmar10_3014 (127 aa).

It belongs to the UPF0102 family.

This Maricaulis maris (strain MCS10) (Caulobacter maris) protein is UPF0102 protein Mmar10_3014.